Here is a 477-residue protein sequence, read N- to C-terminus: Bifunctional protein HldE (477 aa).

The tract at residues Met-1–Glu-318 is ribokinase. Asn-194 to Glu-197 contacts ATP. Asp-263 is an active-site residue. Residues Phe-343–Glu-477 are cytidylyltransferase.

This sequence in the N-terminal section; belongs to the carbohydrate kinase PfkB family. It in the C-terminal section; belongs to the cytidylyltransferase family. As to quaternary structure, homodimer.

The enzyme catalyses D-glycero-beta-D-manno-heptose 7-phosphate + ATP = D-glycero-beta-D-manno-heptose 1,7-bisphosphate + ADP + H(+). It catalyses the reaction D-glycero-beta-D-manno-heptose 1-phosphate + ATP + H(+) = ADP-D-glycero-beta-D-manno-heptose + diphosphate. It functions in the pathway nucleotide-sugar biosynthesis; ADP-L-glycero-beta-D-manno-heptose biosynthesis; ADP-L-glycero-beta-D-manno-heptose from D-glycero-beta-D-manno-heptose 7-phosphate: step 1/4. The protein operates within nucleotide-sugar biosynthesis; ADP-L-glycero-beta-D-manno-heptose biosynthesis; ADP-L-glycero-beta-D-manno-heptose from D-glycero-beta-D-manno-heptose 7-phosphate: step 3/4. Functionally, catalyzes the phosphorylation of D-glycero-D-manno-heptose 7-phosphate at the C-1 position to selectively form D-glycero-beta-D-manno-heptose-1,7-bisphosphate. Catalyzes the ADP transfer from ATP to D-glycero-beta-D-manno-heptose 1-phosphate, yielding ADP-D-glycero-beta-D-manno-heptose. The sequence is that of Bifunctional protein HldE from Pseudomonas fluorescens (strain ATCC BAA-477 / NRRL B-23932 / Pf-5).